A 781-amino-acid polypeptide reads, in one-letter code: LPS-assembly protein LptD (781 aa).

The signal sequence occupies residues 1-24 (MKKNYYTVLSLSILTALYSTSSQA).

This sequence belongs to the LptD family. Component of the lipopolysaccharide transport and assembly complex. Interacts with LptE and LptA.

The protein localises to the cell outer membrane. Functionally, together with LptE, is involved in the assembly of lipopolysaccharide (LPS) at the surface of the outer membrane. The polypeptide is LPS-assembly protein LptD (Histophilus somni (strain 129Pt) (Haemophilus somnus)).